We begin with the raw amino-acid sequence, 534 residues long: MDFANIASQLNAGTILPEGIVILTLLGVLIVDLILGRTSARWIGYLAIAGLFTSIVALYFQWDNPNPISFTGGFNGDDLSIVFRGIIALSAAVTILMSIRYVDQSGTPLAEFIAILLSATLGGMFLSGASELVMIFISLETLSISSYLLTGYTKRDPRSNEAALKYLLIGASSTAVFLYGVSLLYGLSGGQTELSAIANGIATAKVGQSLGLVIALVFAIAGIGFKISAAPFHQWTPDVYEGAPTPVIAFLSVGSKAAGFALAIRLLTTAFPLVADEWRFVFTALAVLSMILGNVVALAQTSMKRMLAYSSIAQAGFVMIGLIAGTQAGYASMIFYLLVYLFMNLCGFTCIILFSLRTGTDQIAEYSGLYQKDPLLTLGLSIALLSLGGIPPLAGFFGKIYLFWAGWQAGLYWLVLLGLVTTVVSIYYYIRVVKMMVVKEPHEMSDAVKNYPQVRWDLPGLRPLQVGLVITLIATSLAGILSNPLFTLANNSISNTPFLQATINSHVEAQNLLLLPKLDSVSQSQPSVDSTAKI.

14 helical membrane-spanning segments follow: residues 15 to 35 (ILPE…DLIL), 42 to 62 (WIGY…YFQW), 79 to 99 (LSIV…LMSI), 109 to 129 (LAEF…LSGA), 132 to 152 (LVMI…LTGY), 167 to 187 (LLIG…LYGL), 210 to 230 (LGLV…ISAA), 244 to 264 (PTPV…ALAI), 280 to 300 (FVFT…ALAQ), 306 to 326 (MLAY…IAGT), 334 to 354 (IFYL…IILF), 378 to 398 (LGLS…GFFG), 410 to 432 (GLYW…YIRV), and 466 to 486 (VGLV…NPLF).

This sequence belongs to the complex I subunit 2 family. In terms of assembly, NDH-1 can be composed of about 15 different subunits; different subcomplexes with different compositions have been identified which probably have different functions.

It localises to the cellular thylakoid membrane. It carries out the reaction a plastoquinone + NADH + (n+1) H(+)(in) = a plastoquinol + NAD(+) + n H(+)(out). The catalysed reaction is a plastoquinone + NADPH + (n+1) H(+)(in) = a plastoquinol + NADP(+) + n H(+)(out). NDH-1 shuttles electrons from an unknown electron donor, via FMN and iron-sulfur (Fe-S) centers, to quinones in the respiratory and/or the photosynthetic chain. The immediate electron acceptor for the enzyme in this species is believed to be plastoquinone. Couples the redox reaction to proton translocation, and thus conserves the redox energy in a proton gradient. Cyanobacterial NDH-1 also plays a role in inorganic carbon-concentration. This Nostoc punctiforme (strain ATCC 29133 / PCC 73102) protein is NAD(P)H-quinone oxidoreductase subunit 2.